The chain runs to 652 residues: Proline-rich receptor-like protein kinase PERK1 (652 aa).

The segment at Met1 to Ser137 is disordered. At Met1–Gly139 the chain is on the extracellular side. The segment covering Gly8–Pro19 has biased composition (pro residues). 2 N-linked (GlcNAc...) asparagine glycosylation sites follow: Asn21 and Asn50. The segment covering Thr26–Thr112 has biased composition (pro residues). The span at Pro113–Ser137 shows a compositional bias: low complexity. Residues Val140 to Leu160 traverse the membrane as a helical segment. Topologically, residues Leu161–Leu652 are cytoplasmic. The tract at residues Arg169–Val251 is disordered. Over residues Asn203–Val213 the composition is skewed to polar residues. Positions Leu216–Ala236 are enriched in pro residues. Thr269 is subject to Phosphothreonine. Residues Phe280–Leu559 form the Protein kinase domain. ATP contacts are provided by residues Leu286–Val294 and Lys308. Tyr353 carries the phosphotyrosine modification. Asp404 functions as the Proton acceptor in the catalytic mechanism. Phosphoserine is present on residues Ser408 and Ser437. Thr438 and Thr443 each carry phosphothreonine. Phosphotyrosine is present on Tyr451. Polar residues predominate over residues Tyr605 to Ser616. Residues Tyr605–Leu652 form a disordered region.

Belongs to the protein kinase superfamily. Ser/Thr protein kinase family. In terms of tissue distribution, mostly expressed in inflorescence bolt, flower buds and siliques, and, to a lower extent, in roots, seedlings and leaves.

Its subcellular location is the cell membrane. It carries out the reaction L-seryl-[protein] + ATP = O-phospho-L-seryl-[protein] + ADP + H(+). The catalysed reaction is L-threonyl-[protein] + ATP = O-phospho-L-threonyl-[protein] + ADP + H(+). In Arabidopsis thaliana (Mouse-ear cress), this protein is Proline-rich receptor-like protein kinase PERK1 (PERK1).